Here is a 209-residue protein sequence, read N- to C-terminus: C-type lectin domain family 6 member A (209 aa).

Over 1–20 (MVQERHPQRKGVCWTLRLWS) the chain is Cytoplasmic. A helical; Signal-anchor for type II membrane protein membrane pass occupies residues 21-43 (TAVISMLLLSTCFIASCMVTYQF). The Extracellular portion of the chain corresponds to 44 to 209 (TMEKPNRRLS…SICETKKIYL (166 aa)). Cystine bridges form between Cys64–Cys78 and Cys79–Cys90. The C-type lectin domain occupies 86–203 (FGSSCYLIST…CDSKHNSICE (118 aa)). Ca(2+) is bound by residues Val116, Asn118, and Glu122. N-linked (GlcNAc...) asparagine glycosylation is present at Asn131. Positions 168, 170, and 174 each coordinate Ca(2+). Residues 168–170 (EPN), Glu174, Trp182, and 190–191 (ND) each bind alpha-D-mannopyranose. The cysteines at positions 176 and 194 are disulfide-linked. Residues Asn190, Asp191, and Glu203 each coordinate Ca(2+).

In terms of assembly, associated with FCER1G. Heterodimer with CLEC4D; this heterodimer forms a pattern recognition receptor (PRR) against fungal infection.

It is found in the cell membrane. Calcium-dependent lectin that acts as a pattern recognition receptor (PRR) of the innate immune system: specifically recognizes and binds alpha-mannans on C.albicans hypheas. Binding of C.albicans alpha-mannans to this receptor complex leads to phosphorylation of the immunoreceptor tyrosine-based activation motif (ITAM) of FCER1G, triggering activation of SYK, CARD9 and NF-kappa-B, consequently driving maturation of antigen-presenting cells and shaping antigen-specific priming of T-cells toward effector T-helper 1 and T-helper 17 cell subtypes. Also recognizes, in a mannose-dependent manner, allergens from house dust mite and fungi, by promoting cysteinyl leukotriene production. Recognizes soluble elements from the eggs of Shistosoma mansoni altering adaptive immune responses. This chain is C-type lectin domain family 6 member A (CLEC6A), found in Rattus norvegicus (Rat).